A 1399-amino-acid chain; its full sequence is DNA-directed RNA polymerase subunit beta' (1399 aa).

Zn(2+) is bound by residues cysteine 71, cysteine 73, cysteine 86, and cysteine 89. Mg(2+) contacts are provided by aspartate 462, aspartate 464, and aspartate 466. Residues cysteine 810, cysteine 884, cysteine 891, and cysteine 894 each coordinate Zn(2+). A disordered region spans residues lysine 1379–glutamate 1399. Over residues glutamine 1387 to glutamate 1399 the composition is skewed to pro residues.

Belongs to the RNA polymerase beta' chain family. The RNAP catalytic core consists of 2 alpha, 1 beta, 1 beta' and 1 omega subunit. When a sigma factor is associated with the core the holoenzyme is formed, which can initiate transcription. Mg(2+) is required as a cofactor. The cofactor is Zn(2+).

It catalyses the reaction RNA(n) + a ribonucleoside 5'-triphosphate = RNA(n+1) + diphosphate. DNA-dependent RNA polymerase catalyzes the transcription of DNA into RNA using the four ribonucleoside triphosphates as substrates. The sequence is that of DNA-directed RNA polymerase subunit beta' from Bradyrhizobium sp. (strain BTAi1 / ATCC BAA-1182).